A 365-amino-acid chain; its full sequence is Putative tRNA 2'-phosphotransferase (365 aa).

Disordered regions lie at residues 1-35 and 231-254; these read MYKN…IRPR and LLDA…PESI. The span at 17 to 27 shows a compositional bias: low complexity; it reads SGTPATKSSSK.

The protein belongs to the KptA/TPT1 family.

The catalysed reaction is 2'-phospho-[ligated tRNA] + NAD(+) = mature tRNA + ADP-alpha-D-ribose 1'',2''-cyclic phosphate + nicotinamide. In terms of biological role, catalyzes the last step of tRNA splicing, the transfer of the splice junction 2'-phosphate from ligated tRNA to NAD to produce ADP-ribose 1''-2'' cyclic phosphate. The sequence is that of Putative tRNA 2'-phosphotransferase from Schizosaccharomyces pombe (strain 972 / ATCC 24843) (Fission yeast).